The chain runs to 408 residues: 4-O-methyl-glucuronoyl methylesterase 1 (408 aa).

Positions 1 to 19 (MASSSRFAALLLLALPALA) are cleaved as a signal peptide. 3 disulfide bridges follow: cysteine 31-cysteine 65, cysteine 218-cysteine 354, and cysteine 250-cysteine 326. Positions 217-222 (GCSRDG) match the GXSYXG catalytic site motif motif. Residue serine 219 is the Nucleophile of the active site. 3 residues coordinate substrate: lysine 223, glutamine 265, and glutamate 273. The N-linked (GlcNAc...) asparagine glycan is linked to asparagine 287. Tryptophan 317 lines the substrate pocket. The N-linked (GlcNAc...) asparagine glycan is linked to asparagine 350. Residue histidine 353 is the Proton donor/acceptor of the active site. 3 N-linked (GlcNAc...) asparagine glycosylation sites follow: asparagine 390, asparagine 395, and asparagine 401.

The protein belongs to the carbohydrate esterase 15 (CE15) family.

It is found in the secreted. It catalyses the reaction a 4-O-methyl-alpha-D-glucuronosyl ester derivative + H2O = 4-O-methyl-alpha-D-glucuronate derivative + an alcohol + H(+). In terms of biological role, glucuronoyl esterase which may play a significant role in biomass degradation, as it is considered to disconnect hemicellulose from lignin through the hydrolysis of the ester bond between 4-O-methyl-D-glucuronic acid residues of glucuronoxylans and aromatic alcohols of lignin. Can hydrolyze benzyl glucuronic acid (BnGlcA), allyl glucuronic acid (allylGlcA) and to a lower degree methyl glucuronic acid (MeGlcA) in vitro. The sequence is that of 4-O-methyl-glucuronoyl methylesterase 1 from Wolfiporia cocos (strain MD-104) (Brown rot fungus).